Reading from the N-terminus, the 364-residue chain is MPEVQRMTLTQFLIEERRRYPDASGGFNGLILNVAMACKEIARAVAFGALGGLHGKASTQAGEEGAVNVQGEIQQKLDVLSNTTFLRVNEWGGYLAGMASEEMEAPYQIPENYPRGKYLLVFDPLDGSSNIDVNVSVGSIFSVLRAPEGADTVTEQDFLQPGSAQVAAGYALYGPTTMLVLTVGNGVNGFTLDPNLGEFFLTHPHLRVPPDTQEFAINASNSRFWEAPVQRYIGECMAGKSGPRGKDFNMRWIASMVAEAHRILMRGGVFMYPRDTKDPAKPGRLRLLYEANPIAFLMEQAGGRASTGRQTLMSVAPGALHQRIGVIFGSRNEVERIEGYHTNQTDPDLPSPLFNERSLFRASA.

Glutamate 101, aspartate 123, leucine 125, and aspartate 126 together coordinate Mg(2+). Residues 126 to 129 (DGSS) and asparagine 218 contribute to the substrate site. Glutamate 290 contributes to the Mg(2+) binding site.

The protein belongs to the FBPase class 1 family. Homotetramer. Mg(2+) serves as cofactor.

It localises to the cytoplasm. The catalysed reaction is beta-D-fructose 1,6-bisphosphate + H2O = beta-D-fructose 6-phosphate + phosphate. Its pathway is carbohydrate biosynthesis; gluconeogenesis. The polypeptide is Fructose-1,6-bisphosphatase class 1 3 (Cupriavidus necator (strain ATCC 17699 / DSM 428 / KCTC 22496 / NCIMB 10442 / H16 / Stanier 337) (Ralstonia eutropha)).